A 550-amino-acid chain; its full sequence is CTP synthase (550 aa).

Residues 1–271 (MTRYIFITGG…DAEVLDVFGM (271 aa)) are amidoligase domain. Ser-13 contacts CTP. Ser-13 contributes to the UTP binding site. Residue 14–19 (SLGKGL) coordinates ATP. An L-glutamine-binding site is contributed by Tyr-54. ATP is bound at residue Asp-71. The Mg(2+) site is built by Asp-71 and Glu-145. CTP contacts are provided by residues 152 to 154 (DIE), 192 to 197 (KTKPTQ), and Lys-228. UTP is bound by residues 192–197 (KTKPTQ) and Lys-228. The 253-residue stretch at 297–549 (TIAVVGKYTV…IAAAKEQGRL (253 aa)) folds into the Glutamine amidotransferase type-1 domain. Gly-361 is an L-glutamine binding site. Cys-388 acts as the Nucleophile; for glutamine hydrolysis in catalysis. L-glutamine contacts are provided by residues 389-392 (FGMQ), Glu-412, and Arg-477. Active-site residues include His-522 and Glu-524.

This sequence belongs to the CTP synthase family. In terms of assembly, homotetramer.

The catalysed reaction is UTP + L-glutamine + ATP + H2O = CTP + L-glutamate + ADP + phosphate + 2 H(+). It carries out the reaction L-glutamine + H2O = L-glutamate + NH4(+). The enzyme catalyses UTP + NH4(+) + ATP = CTP + ADP + phosphate + 2 H(+). Its pathway is pyrimidine metabolism; CTP biosynthesis via de novo pathway; CTP from UDP: step 2/2. Its activity is regulated as follows. Allosterically activated by GTP, when glutamine is the substrate; GTP has no effect on the reaction when ammonia is the substrate. The allosteric effector GTP functions by stabilizing the protein conformation that binds the tetrahedral intermediate(s) formed during glutamine hydrolysis. Inhibited by the product CTP, via allosteric rather than competitive inhibition. Catalyzes the ATP-dependent amination of UTP to CTP with either L-glutamine or ammonia as the source of nitrogen. Regulates intracellular CTP levels through interactions with the four ribonucleotide triphosphates. This Caulobacter sp. (strain K31) protein is CTP synthase.